A 338-amino-acid polypeptide reads, in one-letter code: Glyceraldehyde-3-phosphate dehydrogenase GAPC2, cytosolic (338 aa).

Residues 15-16 (RI), aspartate 37, and arginine 84 contribute to the NAD(+) site. 155–157 (SCT) contacts D-glyceraldehyde 3-phosphate. The Nucleophile role is filled by cysteine 156. An S-glutathionyl cysteine; transient; alternate modification is found at cysteine 156. Cysteine 156 bears the S-nitrosocysteine; transient; alternate mark. Cysteine 160 carries the post-translational modification S-nitrosocysteine; transient. D-glyceraldehyde 3-phosphate is bound by residues threonine 186, 215–216 (TG), and arginine 238. Asparagine 320 provides a ligand contact to NAD(+).

Belongs to the glyceraldehyde-3-phosphate dehydrogenase family. Homotetramer. Interacts with PLDDELTA. Binds to DPB3-1/NF-YC10 in response to heat-stress; this interaction promotes DPB3-1/NF-YC10 DNA-binding ability to its target promoter. In terms of processing, S-glutathionylation at Cys-156 in the presence of oxidized glutathione (GSSG). S-nitrosylation at Cys-156 and Cys-160 in the presence of S-nitrosoglutathione (GSNO) or sodium nitroprusside (SNP). These reactions may be both a protective mechanism against irreversible oxidation and a mean to store inhibited enzyme in a recoverable form.

It is found in the cytoplasm. Its subcellular location is the nucleus. The enzyme catalyses D-glyceraldehyde 3-phosphate + phosphate + NAD(+) = (2R)-3-phospho-glyceroyl phosphate + NADH + H(+). The protein operates within carbohydrate degradation; glycolysis; pyruvate from D-glyceraldehyde 3-phosphate: step 1/5. Its activity is regulated as follows. Inhibition by oxidized glutathione (GSSG), S-nitrosoglutathione (GSNO) and hydrogen peroxide. Key enzyme in glycolysis that catalyzes the first step of the pathway by converting D-glyceraldehyde 3-phosphate (G3P) into 3-phospho-D-glyceroyl phosphate. Essential for the maintenance of cellular ATP levels and carbohydrate metabolism. Binds DNA in vitro. Together with DNA polymerase II subunit B3-1 (DPB3-1) and GAPC1, enhances heat tolerance and promotes the expression of heat-inducible genes. This Arabidopsis thaliana (Mouse-ear cress) protein is Glyceraldehyde-3-phosphate dehydrogenase GAPC2, cytosolic.